The primary structure comprises 243 residues: Adenosylcobinamide-GDP ribazoletransferase (243 aa).

7 helical membrane-spanning segments follow: residues 8–28, 36–56, 58–78, 107–127, 131–151, 187–207, and 222–242; these read WLGA…PIQL, PWVG…LDFL, VPSP…TGGL, AGAF…TSLS, KGSV…WAIA, FLLP…LLIP, and YGAV…VGSA.

This sequence belongs to the CobS family. Mg(2+) serves as cofactor.

The protein resides in the cell inner membrane. It catalyses the reaction alpha-ribazole + adenosylcob(III)inamide-GDP = adenosylcob(III)alamin + GMP + H(+). The catalysed reaction is alpha-ribazole 5'-phosphate + adenosylcob(III)inamide-GDP = adenosylcob(III)alamin 5'-phosphate + GMP + H(+). Its pathway is cofactor biosynthesis; adenosylcobalamin biosynthesis; adenosylcobalamin from cob(II)yrinate a,c-diamide: step 7/7. Joins adenosylcobinamide-GDP and alpha-ribazole to generate adenosylcobalamin (Ado-cobalamin). Also synthesizes adenosylcobalamin 5'-phosphate from adenosylcobinamide-GDP and alpha-ribazole 5'-phosphate. This Thermosynechococcus vestitus (strain NIES-2133 / IAM M-273 / BP-1) protein is Adenosylcobinamide-GDP ribazoletransferase.